Consider the following 225-residue polypeptide: Futalosine hydrolase (225 aa).

Belongs to the PNP/UDP phosphorylase family. Futalosine hydrolase subfamily. In terms of assembly, homotetramer.

The catalysed reaction is futalosine + H2O = dehypoxanthine futalosine + hypoxanthine. The protein operates within quinol/quinone metabolism; menaquinone biosynthesis. Its activity is regulated as follows. No enhancing of inhibitory effects are observed with divalent metal ions. Slightly inhibited by hypoxanthine. Its function is as follows. Catalyzes the hydrolysis of futalosine (FL) to dehypoxanthine futalosine (DHFL) and hypoxanthine, a step in the biosynthesis of menaquinone (MK, vitamin K2). Is highly specific to futalosine since it does not accept aminodeoxyfutalosine (AFL), or any structurally related nucleotides and nucleosides as substrate. This Thermus thermophilus (strain ATCC 27634 / DSM 579 / HB8) protein is Futalosine hydrolase.